The chain runs to 312 residues: HPr kinase/phosphorylase (312 aa).

Active-site residues include histidine 139 and lysine 160. An ATP-binding site is contributed by 154–161; the sequence is GSSGVGKS. Residue serine 161 coordinates Mg(2+). Residue aspartate 178 is the Proton acceptor; for phosphorylation activity. Proton donor; for dephosphorylation activity of the active site. Positions 202-211 are important for the catalytic mechanism of both phosphorylation and dephosphorylation; the sequence is LEIRGLGIIN. Glutamate 203 is a binding site for Mg(2+). Residue arginine 244 is part of the active site. An important for the catalytic mechanism of dephosphorylation region spans residues 265–270; it reads PVRPGR.

It belongs to the HPrK/P family. In terms of assembly, homohexamer. Mg(2+) is required as a cofactor.

The enzyme catalyses [HPr protein]-L-serine + ATP = [HPr protein]-O-phospho-L-serine + ADP + H(+). The catalysed reaction is [HPr protein]-O-phospho-L-serine + phosphate + H(+) = [HPr protein]-L-serine + diphosphate. Functionally, catalyzes the ATP- as well as the pyrophosphate-dependent phosphorylation of a specific serine residue in HPr, a phosphocarrier protein of the phosphoenolpyruvate-dependent sugar phosphotransferase system (PTS). HprK/P also catalyzes the pyrophosphate-producing, inorganic phosphate-dependent dephosphorylation (phosphorolysis) of seryl-phosphorylated HPr (P-Ser-HPr). The two antagonistic activities of HprK/P are regulated by several intracellular metabolites, which change their concentration in response to the absence or presence of rapidly metabolisable carbon sources (glucose, fructose, etc.) in the growth medium. Therefore, by controlling the phosphorylation state of HPr, HPrK/P is a sensor enzyme that plays a major role in the regulation of carbon metabolism and sugar transport: it mediates carbon catabolite repression (CCR), and regulates PTS-catalyzed carbohydrate uptake and inducer exclusion. In Listeria monocytogenes serotype 4b (strain CLIP80459), this protein is HPr kinase/phosphorylase.